The following is a 370-amino-acid chain: MSALHSLRTHAVSIRAVRKVYGDPESGPVALKRVDLDIRDNEFFTLLGPSGCGKTTLLRMIAGFEFPTEGEILLYGENIAARPPFERPVNTVFQHYALFPHMSIAENLAFGLESRPLGRSLGKAEIAERVREMLALVQMERFADRRPGQLSGGQQQRVALARALAPQPRVLLLDEPLSALDLKLRQAMREELKAIQAKTGITFIFVTHDQEEALTMSDRIAVLSEGQVQQVGPPEEIYERPGNRFVADFIGETNFIEAELLQRDGPLALYRGPGGEAFEAAARDGLAAGARVCLSIRPERLDLLAANTGGGLPCTVESQVYLGTDLQYRVRLADGSLLTVRTPNGTARRFATGEAACLAVAKDSASVLLD.

An ABC transporter domain is found at 12 to 250; sequence VSIRAVRKVY…PGNRFVADFI (239 aa). 48–55 contributes to the ATP binding site; that stretch reads GPSGCGKT.

It belongs to the ABC transporter superfamily. Spermidine/putrescine importer (TC 3.A.1.11.1) family. In terms of assembly, the complex is composed of two ATP-binding proteins (PotA), two transmembrane proteins (PotB and PotC) and a solute-binding protein (PotD).

The protein localises to the cell inner membrane. It catalyses the reaction ATP + H2O + polyamine-[polyamine-binding protein]Side 1 = ADP + phosphate + polyamineSide 2 + [polyamine-binding protein]Side 1.. Its function is as follows. Part of the ABC transporter complex PotABCD involved in spermidine/putrescine import. Responsible for energy coupling to the transport system. This is Spermidine/putrescine import ATP-binding protein PotA 1 from Pseudomonas aeruginosa (strain ATCC 15692 / DSM 22644 / CIP 104116 / JCM 14847 / LMG 12228 / 1C / PRS 101 / PAO1).